A 196-amino-acid polypeptide reads, in one-letter code: Gastrula zinc finger protein XlCGF8.2DB (196 aa).

7 consecutive C2H2-type zinc fingers follow at residues 6–28 (FTCK…MTIH), 34–56 (FSCT…LTIH), 62–84 (FPCT…MKIH), 90–112 (FTCT…LKIH), 118–140 (FSCT…MKIH), 146–168 (FTCT…LKMH), and 174–196 (FTCT…MKIH).

This sequence belongs to the krueppel C2H2-type zinc-finger protein family.

It is found in the nucleus. Its function is as follows. May be involved in transcriptional regulation. The polypeptide is Gastrula zinc finger protein XlCGF8.2DB (Xenopus laevis (African clawed frog)).